A 518-amino-acid polypeptide reads, in one-letter code: Ethanolamine kinase (518 aa).

Residues M1 to G19 show a composition bias toward polar residues. Residues M1–S88 form a disordered region. Residues Q33–E68 show a composition bias toward low complexity. Positions N69–S88 are enriched in basic and acidic residues. S190 and S194 each carry phosphoserine.

The protein belongs to the choline/ethanolamine kinase family.

The protein localises to the cytoplasm. It catalyses the reaction ethanolamine + ATP = phosphoethanolamine + ADP + H(+). It functions in the pathway phospholipid metabolism; phosphatidylethanolamine biosynthesis; phosphatidylethanolamine from ethanolamine: step 1/3. Its function is as follows. Highly specific for ethanolamine phosphorylation. May be a rate-controlling step in phosphatidylethanolamine biosynthesis. This is Ethanolamine kinase (eas) from Drosophila melanogaster (Fruit fly).